Here is a 394-residue protein sequence, read N- to C-terminus: Elongation factor Tu (394 aa).

Residues 10-204 (KPHVNVGTIG…YLDSYIPEPE (195 aa)) enclose the tr-type G domain. Residues 19-26 (GHVDHGKT) are G1. 19 to 26 (GHVDHGKT) contacts GTP. Thr-26 contacts Mg(2+). The G2 stretch occupies residues 60–64 (GITIN). Positions 81 to 84 (DCPG) are G3. GTP is bound by residues 81–85 (DCPGH) and 136–139 (NKCD). The tract at residues 136-139 (NKCD) is G4. A G5 region spans residues 174-176 (SAL).

Belongs to the TRAFAC class translation factor GTPase superfamily. Classic translation factor GTPase family. EF-Tu/EF-1A subfamily. As to quaternary structure, monomer.

The protein resides in the cytoplasm. It carries out the reaction GTP + H2O = GDP + phosphate + H(+). GTP hydrolase that promotes the GTP-dependent binding of aminoacyl-tRNA to the A-site of ribosomes during protein biosynthesis. The chain is Elongation factor Tu from Enterobacter sp. (strain 638).